Consider the following 608-residue polypeptide: Mitochondrial import receptor subunit TOM70 (608 aa).

Ala2 bears the N-acetylalanine mark. Topologically, residues 2–38 (AASKPVEAAVVAAAVPSSGSGVGGGGTAGPGTGGLPR) are mitochondrial intermembrane. The helical transmembrane segment at 39 to 59 (WQLALAVGAPLLLGAGAIYLW) threads the bilayer. The Cytoplasmic segment spans residues 60–608 (SRQQRRREAR…KKYGLKPPTL (549 aa)). The disordered stretch occupies residues 67–107 (EARGRGDASGLKRNSERKTPEGRASPAPGSGHPEGPGAHLD). Arg71 is modified (omega-N-methylarginine). 3 positions are modified to phosphoserine: Ser91, Ser96, and Ser110. 2 TPR repeats span residues 114–147 (AQAA…CPTE) and 153–186 (STFY…NPKY). Lys185 carries the N6-acetyllysine modification. A Glycyl lysine isopeptide (Lys-Gly) (interchain with G-Cter in SUMO2) cross-link involves residue Lys275. 8 TPR repeats span residues 294-327 (ENSG…EGKY), 329-362 (AEAL…KEAN), 367-400 (ANAL…DPQN), 401-434 (ADVY…RPES), 440-475 (QKCF…FPRC), 476-509 (AEGY…EPDN), 511-544 (TTYV…DNKC), and 545-578 (DFAY…AKSE). Ser434 is modified (phosphoserine).

The protein belongs to the Tom70 family. Forms part of the preprotein translocase complex of the outer mitochondrial membrane (TOM complex) which consists of at least 7 different proteins (TOMM5, TOMM6, TOMM7, TOMM20, TOMM22, TOMM40 and TOMM70). Interacts with CAPN8. Interacts with TRADD, TRAF6 and STING. Interacts with MAVS; the interaction is enhanced by Sendai virus infection. Interacts with HSPA8 and HSP90AA1; both interactions are required for preprotein mitochondrial import. The interaction with HSP90AA1 is direct and mediates the association of TOMM70 with IRF3 and TBK1. Upon mitochondrial depolarization, interacts with PINK1; the interaction is required for PINK1-TOM-TIM23 supercomplex formation which is critical for PINK1 stabilization at the outer mitochondrial membrane, kinase activation and downstream mitophagy. As to quaternary structure, (Microbial infection) Interacts (via C-terminus) with SARS coronaviru/SARS-CoV and SARS coronavirus-2/SARS-CoV-2 virus protein ORF9b. In terms of assembly, (Microbial infection) Interacts with parasite T.gondii RH strain MAF1b1; the interaction impairs TOMM70 import activity, enables the parasite to associate with the host mitochondria and facilitates the association of MAF1b1 with MIB complex component SAMM50, promoting the formation of SPOTs (structures positive for outer mitochondrial membrane (OMM)); the interaction is probably indirect.

The protein resides in the mitochondrion outer membrane. Its function is as follows. Acts as a receptor of the preprotein translocase complex of the outer mitochondrial membrane (TOM complex). Recognizes and mediates the translocation of mitochondrial preproteins from the cytosol into the mitochondria in a chaperone dependent manner. Mediates TBK1 and IRF3 activation induced by MAVS in response to Sendai virus infection and promotes host antiviral responses during virus infection. Upon Sendai virus infection, recruits HSP90AA1:IRF3:BAX in mitochondrion and the complex induces apoptosis. The protein is Mitochondrial import receptor subunit TOM70 of Homo sapiens (Human).